A 49-amino-acid polypeptide reads, in one-letter code: Glutathione peroxidase (49 aa).

It belongs to the glutathione peroxidase family.

It carries out the reaction 2 glutathione + H2O2 = glutathione disulfide + 2 H2O. Inhibited by Cu(2+), SDS and DTT. Activity is slightly increased by Fe(2+), Mn(2+), triton X-100 and EDTA. In terms of biological role, glutathione peroxidase which may protect the cell from oxidative damage. This Lactiplantibacillus plantarum (Lactobacillus plantarum) protein is Glutathione peroxidase.